A 532-amino-acid polypeptide reads, in one-letter code: Bifunctional purine biosynthesis protein PurH (532 aa).

The region spanning 1–147 (MADRPIRQAL…KNHKDVAIVV (147 aa)) is the MGS-like domain.

Belongs to the PurH family.

The catalysed reaction is (6R)-10-formyltetrahydrofolate + 5-amino-1-(5-phospho-beta-D-ribosyl)imidazole-4-carboxamide = 5-formamido-1-(5-phospho-D-ribosyl)imidazole-4-carboxamide + (6S)-5,6,7,8-tetrahydrofolate. It catalyses the reaction IMP + H2O = 5-formamido-1-(5-phospho-D-ribosyl)imidazole-4-carboxamide. It functions in the pathway purine metabolism; IMP biosynthesis via de novo pathway; 5-formamido-1-(5-phospho-D-ribosyl)imidazole-4-carboxamide from 5-amino-1-(5-phospho-D-ribosyl)imidazole-4-carboxamide (10-formyl THF route): step 1/1. It participates in purine metabolism; IMP biosynthesis via de novo pathway; IMP from 5-formamido-1-(5-phospho-D-ribosyl)imidazole-4-carboxamide: step 1/1. The protein is Bifunctional purine biosynthesis protein PurH of Haemophilus influenzae (strain ATCC 51907 / DSM 11121 / KW20 / Rd).